Consider the following 364-residue polypeptide: Mitogen-activated protein kinase 11 (364 aa).

The 285-residue stretch at 24-308 (LQGLRPVGSG…AAEALAHAYF (285 aa)) folds into the Protein kinase domain. Residues 30–38 (VGSGAYGSV) and K53 contribute to the ATP site. Position 71 (E71) interacts with nilotinib. D150 functions as the Proton acceptor in the catalytic mechanism. At T180 the chain carries Phosphothreonine; by MAP2K3, MAP2K4 and MAP2K6. Positions 180 to 182 (TGY) match the TXY motif. Y182 bears the Phosphotyrosine; by MAP2K3, MAP2K4 and MAP2K6 mark. 2 disordered regions span residues 311–331 (YHDPEDEPEAEPYDESVEAKE) and 343–364 (QEVLSFKPPEPPKPPGSLEIEQ). The segment covering 314–326 (PEDEPEAEPYDES) has biased composition (acidic residues). Y323 is subject to Phosphotyrosine; by ZAP70.

This sequence belongs to the protein kinase superfamily. CMGC Ser/Thr protein kinase family. MAP kinase subfamily. Interacts with HDAC3 and DUSP16. The cofactor is Mg(2+). In terms of processing, dually phosphorylated on Thr-180 and Tyr-182 by MAP2K3/MKK3, MAP2K4/MKK4 and MAP2K6/MKK6, which activates the enzyme. Highest levels in the brain and heart. Also expressed in the placenta, lung, liver, skeletal muscle, kidney and pancreas.

It localises to the cytoplasm. The protein resides in the nucleus. It carries out the reaction L-seryl-[protein] + ATP = O-phospho-L-seryl-[protein] + ADP + H(+). The enzyme catalyses L-threonyl-[protein] + ATP = O-phospho-L-threonyl-[protein] + ADP + H(+). Activated by phosphorylation on threonine and tyrosine by MAP2K3/MKK3, MAP2K4/MKK4 and MAP2K6/MKK6. MAP2K3/MKK3 and MAP2K6/MKK6 are both essential for the activation of MAPK11 induced by environmental stress. HDAC3 interacts directly and selectively with MAPK11 to repress ATF2 transcriptional activity, and regulate TNF gene expression in LPS-stimulated cells. Inhibited by SB203580 and pyridinyl-imidazole related compounds. Functionally, serine/threonine kinase which acts as an essential component of the MAP kinase signal transduction pathway. MAPK11 is one of the four p38 MAPKs which play an important role in the cascades of cellular responses evoked by extracellular stimuli such as pro-inflammatory cytokines or physical stress leading to direct activation of transcription factors. Accordingly, p38 MAPKs phosphorylate a broad range of proteins and it has been estimated that they may have approximately 200 to 300 substrates each. MAPK11 functions are mostly redundant with those of MAPK14. Some of the targets are downstream kinases which are activated through phosphorylation and further phosphorylate additional targets. RPS6KA5/MSK1 and RPS6KA4/MSK2 can directly phosphorylate and activate transcription factors such as CREB1, ATF1, the NF-kappa-B isoform RELA/NFKB3, STAT1 and STAT3, but can also phosphorylate histone H3 and the nucleosomal protein HMGN1. RPS6KA5/MSK1 and RPS6KA4/MSK2 play important roles in the rapid induction of immediate-early genes in response to stress or mitogenic stimuli, either by inducing chromatin remodeling or by recruiting the transcription machinery. On the other hand, two other kinase targets, MAPKAPK2/MK2 and MAPKAPK3/MK3, participate in the control of gene expression mostly at the post-transcriptional level, by phosphorylating ZFP36 (tristetraprolin) and ELAVL1, and by regulating EEF2K, which is important for the elongation of mRNA during translation. MKNK1/MNK1 and MKNK2/MNK2, two other kinases activated by p38 MAPKs, regulate protein synthesis by phosphorylating the initiation factor EIF4E2. In the cytoplasm, the p38 MAPK pathway is an important regulator of protein turnover. For example, CFLAR is an inhibitor of TNF-induced apoptosis whose proteasome-mediated degradation is regulated by p38 MAPK phosphorylation. Ectodomain shedding of transmembrane proteins is regulated by p38 MAPKs as well. In response to inflammatory stimuli, p38 MAPKs phosphorylate the membrane-associated metalloprotease ADAM17. Such phosphorylation is required for ADAM17-mediated ectodomain shedding of TGF-alpha family ligands, which results in the activation of EGFR signaling and cell proliferation. Additional examples of p38 MAPK substrates are the FGFR1. FGFR1 can be translocated from the extracellular space into the cytosol and nucleus of target cells, and regulates processes such as rRNA synthesis and cell growth. FGFR1 translocation requires p38 MAPK activation. In the nucleus, many transcription factors are phosphorylated and activated by p38 MAPKs in response to different stimuli. Classical examples include ATF1, ATF2, ATF6, ELK1, PTPRH, DDIT3, TP53/p53 and MEF2C and MEF2A. The p38 MAPKs are emerging as important modulators of gene expression by regulating chromatin modifiers and remodelers. The promoters of several genes involved in the inflammatory response, such as IL6, IL8 and IL12B, display a p38 MAPK-dependent enrichment of histone H3 phosphorylation on 'Ser-10' (H3S10ph) in LPS-stimulated myeloid cells. This phosphorylation enhances the accessibility of the cryptic NF-kappa-B-binding sites marking promoters for increased NF-kappa-B recruitment. Phosphorylates NLRP1 downstream of MAP3K20/ZAK in response to UV-B irradiation and ribosome collisions, promoting activation of the NLRP1 inflammasome and pyroptosis. Phosphorylates methyltransferase DOT1L on 'Ser-834', 'Thr-900', 'Ser-902', 'Thr-984', 'Ser-1001', 'Ser-1009' and 'Ser-1104'. The polypeptide is Mitogen-activated protein kinase 11 (MAPK11) (Homo sapiens (Human)).